We begin with the raw amino-acid sequence, 379 residues long: Mannan endo-1,4-beta-mannosidase 7 (379 aa).

Substrate-binding residues include tryptophan 64 and asparagine 179. The active-site Proton donor is the glutamate 180. Tyrosine 260 provides a ligand contact to substrate. Glutamate 300 (nucleophile) is an active-site residue. Tryptophan 342 contributes to the substrate binding site.

The protein belongs to the glycosyl hydrolase 5 (cellulase A) family. In terms of tissue distribution, expression not detected.

It carries out the reaction Random hydrolysis of (1-&gt;4)-beta-D-mannosidic linkages in mannans, galactomannans and glucomannans.. The chain is Mannan endo-1,4-beta-mannosidase 7 (MAN7) from Oryza sativa subsp. japonica (Rice).